The following is a 495-amino-acid chain: Flagellin (495 aa).

This sequence belongs to the bacterial flagellin family.

The protein resides in the secreted. It localises to the bacterial flagellum. In terms of biological role, flagellin is the subunit protein which polymerizes to form the filaments of bacterial flagella. This chain is Flagellin (fliC), found in Salmonella paratyphi A (strain ATCC 9150 / SARB42).